The sequence spans 321 residues: Lipoyl synthase (321 aa).

[4Fe-4S] cluster-binding residues include Cys-68, Cys-73, Cys-79, Cys-94, Cys-98, Cys-101, and Ser-308. The region spanning Phe-80–Thr-297 is the Radical SAM core domain.

It belongs to the radical SAM superfamily. Lipoyl synthase family. Requires [4Fe-4S] cluster as cofactor.

The protein localises to the cytoplasm. It carries out the reaction [[Fe-S] cluster scaffold protein carrying a second [4Fe-4S](2+) cluster] + N(6)-octanoyl-L-lysyl-[protein] + 2 oxidized [2Fe-2S]-[ferredoxin] + 2 S-adenosyl-L-methionine + 4 H(+) = [[Fe-S] cluster scaffold protein] + N(6)-[(R)-dihydrolipoyl]-L-lysyl-[protein] + 4 Fe(3+) + 2 hydrogen sulfide + 2 5'-deoxyadenosine + 2 L-methionine + 2 reduced [2Fe-2S]-[ferredoxin]. The protein operates within protein modification; protein lipoylation via endogenous pathway; protein N(6)-(lipoyl)lysine from octanoyl-[acyl-carrier-protein]: step 2/2. Its function is as follows. Catalyzes the radical-mediated insertion of two sulfur atoms into the C-6 and C-8 positions of the octanoyl moiety bound to the lipoyl domains of lipoate-dependent enzymes, thereby converting the octanoylated domains into lipoylated derivatives. The polypeptide is Lipoyl synthase (Cronobacter sakazakii (strain ATCC BAA-894) (Enterobacter sakazakii)).